The chain runs to 341 residues: Phosphate acyltransferase (341 aa).

This sequence belongs to the PlsX family. As to quaternary structure, homodimer. Probably interacts with PlsY.

It localises to the cytoplasm. It catalyses the reaction a fatty acyl-[ACP] + phosphate = an acyl phosphate + holo-[ACP]. It functions in the pathway lipid metabolism; phospholipid metabolism. In terms of biological role, catalyzes the reversible formation of acyl-phosphate (acyl-PO(4)) from acyl-[acyl-carrier-protein] (acyl-ACP). This enzyme utilizes acyl-ACP as fatty acyl donor, but not acyl-CoA. This chain is Phosphate acyltransferase, found in Vibrio vulnificus (strain CMCP6).